The primary structure comprises 291 residues: 4-diphosphocytidyl-2-C-methyl-D-erythritol kinase (291 aa).

Lysine 10 is an active-site residue. An ATP-binding site is contributed by 99–109 (PMGGGLGGGSS). Residue aspartate 141 is part of the active site.

It belongs to the GHMP kinase family. IspE subfamily. In terms of assembly, homodimer.

It carries out the reaction 4-CDP-2-C-methyl-D-erythritol + ATP = 4-CDP-2-C-methyl-D-erythritol 2-phosphate + ADP + H(+). Its pathway is isoprenoid biosynthesis; isopentenyl diphosphate biosynthesis via DXP pathway; isopentenyl diphosphate from 1-deoxy-D-xylulose 5-phosphate: step 3/6. Functionally, catalyzes the phosphorylation of the position 2 hydroxy group of 4-diphosphocytidyl-2C-methyl-D-erythritol. The chain is 4-diphosphocytidyl-2-C-methyl-D-erythritol kinase from Photorhabdus laumondii subsp. laumondii (strain DSM 15139 / CIP 105565 / TT01) (Photorhabdus luminescens subsp. laumondii).